A 113-amino-acid polypeptide reads, in one-letter code: Sensorin-A (113 aa).

A signal peptide spans 1–32 (MPSRAATSPLNVQMMVVLCIVCLALQAVAANA). Phe-54 carries the post-translational modification Phenylalanine amide. Positions 58–113 (SSSETYSTNLINLLSRQLVSQEELRAILEKQPILLDEVVKILDRNDDGYITVADLL) are excised as a propeptide. The EF-hand domain occupies 87 to 113 (KQPILLDEVVKILDRNDDGYITVADLL). Positions 100, 102, 104, 106, and 111 each coordinate Ca(2+).

Seems to be specific to the mechanosensory neurons of the central nervous system.

It is found in the secreted. Its function is as follows. May function as an inhibitory cotransmitter acting in conjunction with the fast excitatory transmitter released by sensory neurons. The peptide selectively inhibits certain postsynaptic cells probably by means of sensorin A release. The sequence is that of Sensorin-A (PSC1) from Aplysia californica (California sea hare).